The following is a 375-amino-acid chain: Glutamate 5-kinase (375 aa).

ATP is bound at residue Lys17. Residues Ser58, Asp145, and Asn157 each coordinate substrate. ATP-binding positions include 177–178 and 219–225; these read SD and TGGMVTK. Residues 281–359 enclose the PUA domain; it reads QGALTLDDGA…RELARELGPA (79 aa).

This sequence belongs to the glutamate 5-kinase family.

It is found in the cytoplasm. The catalysed reaction is L-glutamate + ATP = L-glutamyl 5-phosphate + ADP. It participates in amino-acid biosynthesis; L-proline biosynthesis; L-glutamate 5-semialdehyde from L-glutamate: step 1/2. Its function is as follows. Catalyzes the transfer of a phosphate group to glutamate to form L-glutamate 5-phosphate. The polypeptide is Glutamate 5-kinase (Streptomyces avermitilis (strain ATCC 31267 / DSM 46492 / JCM 5070 / NBRC 14893 / NCIMB 12804 / NRRL 8165 / MA-4680)).